Reading from the N-terminus, the 475-residue chain is Cysteine--tRNA ligase (475 aa).

C28 is a binding site for Zn(2+). The 'HIGH' region signature appears at 30–40 (PTVYDETHIGH). Positions 208, 233, and 237 each coordinate Zn(2+). Positions 265 to 269 (KMSKS) match the 'KMSKS' region motif. K268 contacts ATP.

It belongs to the class-I aminoacyl-tRNA synthetase family. Zn(2+) is required as a cofactor.

It localises to the cytoplasm. It carries out the reaction tRNA(Cys) + L-cysteine + ATP = L-cysteinyl-tRNA(Cys) + AMP + diphosphate. The polypeptide is Cysteine--tRNA ligase (Methanococcus vannielii (strain ATCC 35089 / DSM 1224 / JCM 13029 / OCM 148 / SB)).